Consider the following 513-residue polypeptide: Probable histone deacetylase 19 (513 aa).

Residues 23–334 (RRVCYFYDPD…WCYETGVALG (312 aa)) are histone deacetylase. The active-site Proton donor/acceptor is His154. Asp189, His191, and Asp277 together coordinate Zn(2+). Disordered stretches follow at residues 384–432 (HAPS…ESSR) and 446–513 (ENAT…YHKP). Residues 398-409 (EIPEQDEDQDDP) are compositionally biased toward acidic residues. The segment covering 410-432 (DERHDPDSDMEVDDHKAVEESSR) has biased composition (basic and acidic residues). The segment covering 492–504 (NVKNEPESSTKLQ) has biased composition (polar residues).

It belongs to the histone deacetylase family. HD type 1 subfamily. Zn(2+) is required as a cofactor.

It is found in the nucleus. It catalyses the reaction N(6)-acetyl-L-lysyl-[histone] + H2O = L-lysyl-[histone] + acetate. In terms of biological role, responsible for the deacetylation of lysine residues on the N-terminal part of the core histones (H2A, H2B, H3 and H4). Histone deacetylation gives a tag for epigenetic repression and plays an important role in transcriptional regulation, cell cycle progression and developmental events. Histone deacetylases act via the formation of large multiprotein complexes. This chain is Probable histone deacetylase 19, found in Zea mays (Maize).